The chain runs to 416 residues: Solute carrier family 35 member D3 (416 aa).

Helical transmembrane passes span 9–29 (VLGI…NILL), 38–58 (FSFL…SLEL), 64–84 (LIAV…VAVL), 103–123 (MYVV…VLVL), 131–151 (GVLA…AGDL), 155–175 (PIGY…LVLI), 187–207 (LTAQ…CSFA), 224–244 (AMVC…FTTL), 257–277 (FVGV…FSDV), and 280–300 (TSLF…YCVA). Positions 334 to 384 (MEELPGEGGNGRSEGGEAAGGPAQESRQEVRGSPRGVPLVAGSSEEGSRRS) are disordered. The segment covering 339 to 352 (GEGGNGRSEGGEAA) has biased composition (gly residues).

This sequence belongs to the TPT transporter family. SLC35D subfamily. As to quaternary structure, could interact with ATG14, BECN1 and PIK3C3 that form the PI3KC3-C1/AIC/autophagy initiation complex; enhancing the formation of the AIC and promoting autophagy.

Its subcellular location is the cytoplasmic vesicle. It localises to the secretory vesicle. The protein localises to the synaptic vesicle membrane. The protein resides in the early endosome membrane. It is found in the endoplasmic reticulum membrane. It catalyses the reaction UDP-alpha-D-glucose(in) = UDP-alpha-D-glucose(out). Its activity is regulated as follows. Inhibited by proton uncouplers that directly abolish the proton electrochemical gradient. Functionally, probable UDP-glucose transmembrane transporter involved in UDP-glucose transport from the cytosol to the lumen of synaptic vesicles. It is involved in platelet dense granules maturation. Its function is as follows. Alternatively, could function as a molecular adapter enhancing the formation of the PI3KC3-C1/AIC/autophagy initiation complex to promote autophagy in dopaminergic neurons. Could also regulate the plasma membrane localization of the D(1A) dopamine receptor/DRD1 and dopamine signaling. The sequence is that of Solute carrier family 35 member D3 from Homo sapiens (Human).